A 404-amino-acid chain; its full sequence is Deoxyguanosinetriphosphate triphosphohydrolase-like protein (404 aa).

The disordered stretch occupies residues 1 to 33 (MSVGMAAPRAAYGCDPDRSRGRQFAEPPSNNRS). The HD domain occupies 69-217 (RLTHSLEVAQ…AAIADDIAYD (149 aa)).

This sequence belongs to the dGTPase family. Type 2 subfamily.

The polypeptide is Deoxyguanosinetriphosphate triphosphohydrolase-like protein (Rhodopseudomonas palustris (strain BisB5)).